The chain runs to 334 residues: Holliday junction branch migration complex subunit RuvB (334 aa).

Residues 4 to 184 (ADRLIQPQLQ…FGIPLRLEFY (181 aa)) are large ATPase domain (RuvB-L). ATP-binding positions include arginine 24, glycine 65, lysine 68, threonine 69, threonine 70, 131 to 133 (EDY), arginine 174, tyrosine 184, and arginine 221. Mg(2+) is bound at residue threonine 69. Positions 185–255 (NVKDLSTIVT…VAEQALDLLD (71 aa)) are small ATPAse domain (RuvB-S). Positions 258–334 (GEGFDYMDRK…YLHFGMIKPE (77 aa)) are head domain (RuvB-H). 3 residues coordinate DNA: arginine 294, arginine 313, and arginine 318.

The protein belongs to the RuvB family. Homohexamer. Forms an RuvA(8)-RuvB(12)-Holliday junction (HJ) complex. HJ DNA is sandwiched between 2 RuvA tetramers; dsDNA enters through RuvA and exits via RuvB. An RuvB hexamer assembles on each DNA strand where it exits the tetramer. Each RuvB hexamer is contacted by two RuvA subunits (via domain III) on 2 adjacent RuvB subunits; this complex drives branch migration. In the full resolvosome a probable DNA-RuvA(4)-RuvB(12)-RuvC(2) complex forms which resolves the HJ.

It localises to the cytoplasm. It carries out the reaction ATP + H2O = ADP + phosphate + H(+). Its function is as follows. The RuvA-RuvB-RuvC complex processes Holliday junction (HJ) DNA during genetic recombination and DNA repair, while the RuvA-RuvB complex plays an important role in the rescue of blocked DNA replication forks via replication fork reversal (RFR). RuvA specifically binds to HJ cruciform DNA, conferring on it an open structure. The RuvB hexamer acts as an ATP-dependent pump, pulling dsDNA into and through the RuvAB complex. RuvB forms 2 homohexamers on either side of HJ DNA bound by 1 or 2 RuvA tetramers; 4 subunits per hexamer contact DNA at a time. Coordinated motions by a converter formed by DNA-disengaged RuvB subunits stimulates ATP hydrolysis and nucleotide exchange. Immobilization of the converter enables RuvB to convert the ATP-contained energy into a lever motion, pulling 2 nucleotides of DNA out of the RuvA tetramer per ATP hydrolyzed, thus driving DNA branch migration. The RuvB motors rotate together with the DNA substrate, which together with the progressing nucleotide cycle form the mechanistic basis for DNA recombination by continuous HJ branch migration. Branch migration allows RuvC to scan DNA until it finds its consensus sequence, where it cleaves and resolves cruciform DNA. This Shewanella sp. (strain ANA-3) protein is Holliday junction branch migration complex subunit RuvB.